Reading from the N-terminus, the 345-residue chain is MTQQANQTVATISAEALRQSARNIAAAAPKEGDAWRVDDVAALFALPFNDLLFRAQQVHREHFDANTVQLSTLLSIKTGGCEEDCGYCPQSAHHDAGVKAEKLMDLEAVLDAAKAAKANGATRFCMGAAWREPKERHLEPVIDMVREVKAMGLETCVTLGMLKAEQAQRLKDAGLDYYNHNLDTSPEFYGKIITTRTYQDRLDTIGHVREAGINVCCGGIVGMGEAREARAGLIAQLANMDPYPESVPINNLVQVEGTPLAGTEALDPFEFVRTIAVARITMPRAMVRLSAGREAMDEALQALCFMAGANSIFYGEKLLTTGNPQADRDRALLARLDIRAEGYAG.

A Radical SAM core domain is found at asparagine 66–arginine 293. The [4Fe-4S] cluster site is built by cysteine 81, cysteine 85, and cysteine 88. Residues cysteine 125, cysteine 156, cysteine 216, and arginine 288 each coordinate [2Fe-2S] cluster.

Belongs to the radical SAM superfamily. Biotin synthase family. As to quaternary structure, homodimer. It depends on [4Fe-4S] cluster as a cofactor. The cofactor is [2Fe-2S] cluster.

The catalysed reaction is (4R,5S)-dethiobiotin + (sulfur carrier)-SH + 2 reduced [2Fe-2S]-[ferredoxin] + 2 S-adenosyl-L-methionine = (sulfur carrier)-H + biotin + 2 5'-deoxyadenosine + 2 L-methionine + 2 oxidized [2Fe-2S]-[ferredoxin]. It participates in cofactor biosynthesis; biotin biosynthesis; biotin from 7,8-diaminononanoate: step 2/2. Functionally, catalyzes the conversion of dethiobiotin (DTB) to biotin by the insertion of a sulfur atom into dethiobiotin via a radical-based mechanism. The chain is Biotin synthase from Cupriavidus metallidurans (strain ATCC 43123 / DSM 2839 / NBRC 102507 / CH34) (Ralstonia metallidurans).